Here is a 739-residue protein sequence, read N- to C-terminus: Phosphoribosylformylglycinamidine synthase subunit PurL (739 aa).

Residue His-49 is part of the active site. Residues Tyr-52 and Lys-91 each contribute to the ATP site. Mg(2+) is bound at residue Glu-93. Substrate is bound by residues 94 to 97 and Arg-116; that span reads SHNH. Catalysis depends on His-95, which acts as the Proton acceptor. Asp-117 is a binding site for Mg(2+). Gln-240 is a substrate binding site. Asp-268 is a binding site for Mg(2+). 312-314 is a substrate binding site; that stretch reads ESQ. Residues Asp-493 and Gly-530 each contribute to the ATP site. Residue Asn-531 coordinates Mg(2+). Ser-533 serves as a coordination point for substrate.

Belongs to the FGAMS family. In terms of assembly, monomer. Part of the FGAM synthase complex composed of 1 PurL, 1 PurQ and 2 PurS subunits.

Its subcellular location is the cytoplasm. It catalyses the reaction N(2)-formyl-N(1)-(5-phospho-beta-D-ribosyl)glycinamide + L-glutamine + ATP + H2O = 2-formamido-N(1)-(5-O-phospho-beta-D-ribosyl)acetamidine + L-glutamate + ADP + phosphate + H(+). It functions in the pathway purine metabolism; IMP biosynthesis via de novo pathway; 5-amino-1-(5-phospho-D-ribosyl)imidazole from N(2)-formyl-N(1)-(5-phospho-D-ribosyl)glycinamide: step 1/2. Its function is as follows. Part of the phosphoribosylformylglycinamidine synthase complex involved in the purines biosynthetic pathway. Catalyzes the ATP-dependent conversion of formylglycinamide ribonucleotide (FGAR) and glutamine to yield formylglycinamidine ribonucleotide (FGAM) and glutamate. The FGAM synthase complex is composed of three subunits. PurQ produces an ammonia molecule by converting glutamine to glutamate. PurL transfers the ammonia molecule to FGAR to form FGAM in an ATP-dependent manner. PurS interacts with PurQ and PurL and is thought to assist in the transfer of the ammonia molecule from PurQ to PurL. This chain is Phosphoribosylformylglycinamidine synthase subunit PurL, found in Parvibaculum lavamentivorans (strain DS-1 / DSM 13023 / NCIMB 13966).